A 152-amino-acid chain; its full sequence is Large ribosomal subunit protein uL15 (152 aa).

The tract at residues 1-57 is disordered; that stretch reads MTSTLNTLKSNSGSRKKKLRKGRGIAAGQGASCGFGMRGQKSRSGRPTRPGFEGGQM. The span at 14–23 shows a compositional bias: basic residues; the sequence is SRKKKLRKGR. A compositionally biased stretch (gly residues) spans 25–37; that stretch reads IAAGQGASCGFGM.

This sequence belongs to the universal ribosomal protein uL15 family. As to quaternary structure, part of the 50S ribosomal subunit.

Functionally, binds to the 23S rRNA. This chain is Large ribosomal subunit protein uL15, found in Prochlorococcus marinus (strain MIT 9215).